A 337-amino-acid chain; its full sequence is Phenylalanine--tRNA ligase alpha subunit (337 aa).

E252 is a Mg(2+) binding site.

Belongs to the class-II aminoacyl-tRNA synthetase family. Phe-tRNA synthetase alpha subunit type 1 subfamily. As to quaternary structure, tetramer of two alpha and two beta subunits. Mg(2+) is required as a cofactor.

The protein resides in the cytoplasm. The enzyme catalyses tRNA(Phe) + L-phenylalanine + ATP = L-phenylalanyl-tRNA(Phe) + AMP + diphosphate + H(+). The sequence is that of Phenylalanine--tRNA ligase alpha subunit from Francisella tularensis subsp. novicida (strain U112).